The following is a 582-amino-acid chain: Solute carrier family 15 member 3 (582 aa).

Residues 1–20 (MSALRAEQQPSRSGERQPLV) form a disordered region. 4 helical membrane-spanning segments follow: residues 33–53 (TAAA…FGVT), 77–97 (LLFL…ADVY), 102–122 (LAIS…LTTI), and 155–175 (PYCA…ASSV). N178 carries an N-linked (GlcNAc...) asparagine glycan. A helical transmembrane segment spans residues 201–221 (WFYWSINLGAILSLLVVAFIE). N-linked (GlcNAc...) asparagine glycosylation occurs at N223. The next 2 membrane-spanning stretches (helical) occupy residues 232–252 (IIVG…PVFI) and 312–332 (FQVL…WMVY). N-linked (GlcNAc...) asparagine glycosylation occurs at N357. 2 consecutive transmembrane segments (helical) span residues 371 to 391 (IPEA…VPVK) and 409 to 429 (LQKM…AGVL). A glycan (N-linked (GlcNAc...) asparagine) is linked at N440. 3 consecutive transmembrane segments (helical) span residues 466-485 (YLLI…EFAY), 498-518 (GIFF…VALL), and 541-561 (LYFF…LWIA). N-linked (GlcNAc...) asparagine glycosylation occurs at N575.

The protein belongs to the major facilitator superfamily. Proton-dependent oligopeptide transporter (POT/PTR) (TC 2.A.17) family. As to expression, abundant expression in lung, spleen and thymus, and detected faintly in brain, liver, adrenal gland and heart at protein level.

It localises to the lysosome membrane. It is found in the endosome membrane. The catalysed reaction is N-acetyl-D-muramoyl-L-alanyl-D-isoglutamine(out) + n H(+)(out) = N-acetyl-D-muramoyl-L-alanyl-D-isoglutamine(in) + n H(+)(in). It carries out the reaction glycylglycylglycine(out) + n H(+)(out) = glycylglycylglycine(in) + n H(+)(in). It catalyses the reaction carnosine(out) + n H(+)(out) = carnosine(in) + n H(+)(in). The enzyme catalyses L-histidine(out) + n H(+)(out) = L-histidine(in) + n H(+)(in). Proton-coupled amino-acid transporter that transports free histidine and certain di- and tripeptides, and is involved in innate immune response. Also able to transport carnosine. Involved in the detection of microbial pathogens by toll-like receptors (TLRs) and NOD-like receptors (NLRs), probably by mediating transport of bacterial peptidoglycans across the endolysosomal membrane: catalyzes the transport of certain bacterial peptidoglycans, such as muramyl dipeptide (MDP), the NOD2 ligand. This is Solute carrier family 15 member 3 (Slc15a3) from Rattus norvegicus (Rat).